Here is a 62-residue protein sequence, read N- to C-terminus: Statherin (62 aa).

The signal sequence occupies residues 1–19 (MKFLVFAFILALMVSMIGA). Residues 20 to 25 (DSSEEK) are hydroxyapatite-binding; inhibits crystal growth. Phosphoserine occurs at positions 21 and 22. A cross-link (isoglutamyl lysine isopeptide (Lys-Gln); in form cyclo-statherin Q-37) is located at residues 25–56 (KFLRRIGRFGYGYGPYQPVPEQPLYPQPYQPQ). The segment at residues 25-58 (KFLRRIGRFGYGYGPYQPVPEQPLYPQPYQPQYQ) is a cross-link (isoglutamyl lysine isopeptide (Lys-Gln); in form cyclo-statherin Q-39). Residues 38–62 (GPYQPVPEQPLYPQPYQPQYQQYTF) form a hydrophobic; inhibits precipitation of calcium phosphate salts region.

It belongs to the histatin/statherin family. Post-translationally, substrate for transglutaminase-2. More than 95% of the cyclized peptide is cyclo-statherin Q-37, and less than 5% is cyclo-statherin Q-39. Cyclized forms account for about 1% of total statherin in saliva. Sulfated on tyrosine residues. Secreted by parotid and submandibular glands.

The protein resides in the secreted. In terms of biological role, salivary protein that stabilizes saliva supersaturated with calcium salts by inhibiting the precipitation of calcium phosphate salts. It also modulates hydroxyapatite crystal formation on the tooth surface. This is Statherin (STATH) from Homo sapiens (Human).